Here is a 162-residue protein sequence, read N- to C-terminus: Cytochrome c-type biogenesis protein CcmE (162 aa).

At 1–7 the chain is on the cytoplasmic side; it reads MTRKQRR. The helical; Signal-anchor for type II membrane protein transmembrane segment at 8-28 threads the bilayer; that stretch reads LTMIGGSLVVLAIAAALVLNA. Residues 29-162 are Periplasmic-facing; it reads LRDSIVFFST…EASGKQGVSQ (134 aa). Positions 122 and 126 each coordinate heme. Positions 138-162 are disordered; sequence QGHWKDDYGPQAGAVEASGKQGVSQ.

Belongs to the CcmE/CycJ family.

It localises to the cell inner membrane. Heme chaperone required for the biogenesis of c-type cytochromes. Transiently binds heme delivered by CcmC and transfers the heme to apo-cytochromes in a process facilitated by CcmF and CcmH. This is Cytochrome c-type biogenesis protein CcmE from Nitrobacter hamburgensis (strain DSM 10229 / NCIMB 13809 / X14).